The chain runs to 235 residues: 2,3-bisphosphoglycerate-dependent phosphoglycerate mutase (235 aa).

Residues 8–15, 21–22, arginine 58, 110–113, lysine 121, 137–138, and 181–182 each bind substrate; these read RHGESIWN, TG, ERYY, RR, and GN. Catalysis depends on histidine 9, which acts as the Tele-phosphohistidine intermediate. Residue glutamate 110 is the Proton donor/acceptor of the active site.

Belongs to the phosphoglycerate mutase family. BPG-dependent PGAM subfamily.

The enzyme catalyses (2R)-2-phosphoglycerate = (2R)-3-phosphoglycerate. It functions in the pathway carbohydrate degradation; glycolysis; pyruvate from D-glyceraldehyde 3-phosphate: step 3/5. Its function is as follows. Catalyzes the interconversion of 2-phosphoglycerate and 3-phosphoglycerate. The polypeptide is 2,3-bisphosphoglycerate-dependent phosphoglycerate mutase (Methanococcus vannielii (strain ATCC 35089 / DSM 1224 / JCM 13029 / OCM 148 / SB)).